Reading from the N-terminus, the 225-residue chain is MSNETNCTLDFEQSVELFKEYNLFITAFLLFLTIILQYGYATRSKFIYILKMIVLWCFWPLNIAVGVISCIYPPNTGGLVAAIILTVFACLSFVGYWIQSIRLFKRCRSWWSFNPESNAVGSILLTNGQQCNFAIESVPMVLSPIIKNGVLYCEGQWLAKCEPDHLPKDIFVCTPDRRNIYRMVQKYIGDQSGNKKRFATFVYAKQSVDTGELESVATGGSSLYT.

Residues 1–20 (MSNETNCTLDFEQSVELFKE) are Virion surface-facing. Residues 21–41 (YNLFITAFLLFLTIILQYGYA) traverse the membrane as a helical segment. Residues 42 to 51 (TRSKFIYILK) are Intravirion-facing. A helical membrane pass occupies residues 52–72 (MIVLWCFWPLNIAVGVISCIY). Over 73 to 77 (PPNTG) the chain is Virion surface. A helical membrane pass occupies residues 78-98 (GLVAAIILTVFACLSFVGYWI). Residues 99-225 (QSIRLFKRCR…VATGGSSLYT (127 aa)) are Intravirion-facing.

It belongs to the gammacoronaviruses M protein family. Homomultimer. Interacts with envelope E protein in the budding compartment of the host cell, which is located between endoplasmic reticulum and the Golgi complex. Forms a complex with HE and S proteins. Interacts with nucleocapsid N protein. This interaction probably participates in RNA packaging into the virus.

The protein resides in the virion membrane. It localises to the host Golgi apparatus membrane. Its function is as follows. Component of the viral envelope that plays a central role in virus morphogenesis and assembly via its interactions with other viral proteins. In Gallus gallus (Chicken), this protein is Membrane protein.